The chain runs to 187 residues: Ribosome-recycling factor (187 aa).

This sequence belongs to the RRF family.

Its subcellular location is the cytoplasm. Its function is as follows. Responsible for the release of ribosomes from messenger RNA at the termination of protein biosynthesis. May increase the efficiency of translation by recycling ribosomes from one round of translation to another. The polypeptide is Ribosome-recycling factor (Flavobacterium johnsoniae (strain ATCC 17061 / DSM 2064 / JCM 8514 / BCRC 14874 / CCUG 350202 / NBRC 14942 / NCIMB 11054 / UW101) (Cytophaga johnsonae)).